A 494-amino-acid chain; its full sequence is MTDLTTLTIAQARDALKKRELKATELTEAYLKAIELANPILNTYVAITAEQAMKMAAKSDSRLAKGHGGILEGIPLGIKDLFATQDVHTQACSYILDGFKPHYESTVTANLWRDGAVMLGKLNMDEFAMGSSNETSYYGPVISPWRKKDSNEKLVPGGSSGGSAAAVAAGLCVGATATDTGGSIRQPAAFTGTVGIKPTYGRCSRWGTIAFASSLDQAGPIGRNVRDCAILLKSMASFDEKDSTSVNLPVPDYESYIGQSIKGMKIGIPKEYYLEGMSPEIVELWQKGINWLKEAGAEIKNISLPHTKYALPAYYIVAPAEASSNLARYDGVRFGLRIPGKDVIEMYENTRSVGFGNEVKRRILIGTYVLSSGYYDAYYLKAQKVRTLVKRDFDQCFSSGVDAILTPATPTPAFGIADEKIKNDTVAMYLNDIFTVPVNMAGLPGISVPSGLSSNGLPLGLQLIGKPFAEEVIFQIAHIIEQAAGMFSAEKWWT.

Catalysis depends on charge relay system residues lysine 79 and serine 159. Serine 183 functions as the Acyl-ester intermediate in the catalytic mechanism.

This sequence belongs to the amidase family. GatA subfamily. In terms of assembly, heterotrimer of A, B and C subunits.

The catalysed reaction is L-glutamyl-tRNA(Gln) + L-glutamine + ATP + H2O = L-glutaminyl-tRNA(Gln) + L-glutamate + ADP + phosphate + H(+). Allows the formation of correctly charged Gln-tRNA(Gln) through the transamidation of misacylated Glu-tRNA(Gln) in organisms which lack glutaminyl-tRNA synthetase. The reaction takes place in the presence of glutamine and ATP through an activated gamma-phospho-Glu-tRNA(Gln). The polypeptide is Glutamyl-tRNA(Gln) amidotransferase subunit A (Bartonella henselae (strain ATCC 49882 / DSM 28221 / CCUG 30454 / Houston 1) (Rochalimaea henselae)).